The following is a 721-amino-acid chain: Polyribonucleotide nucleotidyltransferase (721 aa).

The Mg(2+) site is built by D485 and D491. Residues 552–611 (PKIYIVKIHPDKIREIIGPGGKVIRELQAMSNTRIEVDDSGTVKIAASTEEEARIAIKAV) form the KH domain. An S1 motif domain is found at 621-689 (GEIYEGEVVR…PEGKIRLSRK (69 aa)). A disordered region spans residues 687 to 721 (SRKALLPAPEKGEEDEKSAPRSRRPGGNSDRRNNR).

This sequence belongs to the polyribonucleotide nucleotidyltransferase family. Requires Mg(2+) as cofactor.

The protein resides in the cytoplasm. The enzyme catalyses RNA(n+1) + phosphate = RNA(n) + a ribonucleoside 5'-diphosphate. In terms of biological role, involved in mRNA degradation. Catalyzes the phosphorolysis of single-stranded polyribonucleotides processively in the 3'- to 5'-direction. The polypeptide is Polyribonucleotide nucleotidyltransferase (Desulfosudis oleivorans (strain DSM 6200 / JCM 39069 / Hxd3) (Desulfococcus oleovorans)).